The sequence spans 61 residues: Conotoxin 3 (61 aa).

Residues 1–21 (MRCLPVFVILLLLIASVPSDA) form the signal peptide. A propeptide spanning residues 22–48 (VQLKTKDDMPLPSFNGNARRTPRMLSN) is cleaved from the precursor. Residue Trp58 is modified to 6'-bromotryptophan.

This sequence belongs to the conotoxin T superfamily. In terms of processing, contains 2 disulfide bonds that can be either 'C1-C3, C2-C4' or 'C1-C4, C2-C3', since these disulfide connectivities have been observed for conotoxins with cysteine framework V (for examples, see AC P0DQQ7 and AC P81755). Post-translationally, contains 2 disulfide bonds. Expressed by the venom duct.

Its subcellular location is the secreted. The protein is Conotoxin 3 of Conus textile (Cloth-of-gold cone).